A 215-amino-acid polypeptide reads, in one-letter code: MSKAIVLDSHLKEKGSMELPKRYEGINSHNLYLYVKHYLSSVRANTAKSKNRAEVSGGGRKPWAQKGGGRARAGSITSPVFVGGGVSHGATNNRNYNLKINKKQKRLALEYALEEKAQANKLFVVEKIAIKGVVEYNKRKHLAKEANKMFQALEQRDTLFVCMNMDEYTELAFSNLKKCLVIDVSELNAYLLAAFSSVVMEEVAFQHVVQDKTEE.

The disordered stretch occupies residues T46–I76. Gly residues predominate over residues S56 to A71.

Belongs to the universal ribosomal protein uL4 family. Part of the 50S ribosomal subunit.

Functionally, one of the primary rRNA binding proteins, this protein initially binds near the 5'-end of the 23S rRNA. It is important during the early stages of 50S assembly. It makes multiple contacts with different domains of the 23S rRNA in the assembled 50S subunit and ribosome. In terms of biological role, forms part of the polypeptide exit tunnel. The sequence is that of Large ribosomal subunit protein uL4 from Helicobacter acinonychis (strain Sheeba).